A 372-amino-acid polypeptide reads, in one-letter code: Innexin shaking-B (372 aa).

The Cytoplasmic segment spans residues 1-21 (MLDIFRGLKNLVKVSHVKTDS). Residues 22-42 (IVFRLHYSITVMILMSFSLII) traverse the membrane as a helical segment. At 43 to 110 (TTRQYVGNPI…PADKKHYKYY (68 aa)) the chain is on the extracellular side. A helical membrane pass occupies residues 111–131 (QWVCFCLFFQAILFYTPRWLW). Over 132–182 (KSWEGGKIHALIMDLDIGICSEAEKKQKKKLLLDYLWENLRYHNWWAYRYY) the chain is Cytoplasmic. The helical transmembrane segment at 183–203 (VCELLALINVIGQMFLMNRFF) threads the bilayer. At 204-267 (DGEFITFGLK…ILPLNVVNEK (64 aa)) the chain is on the extracellular side. A helical transmembrane segment spans residues 268–288 (IYIFLWFWFILLTFLTLLTLI). Residues 289–372 (YRVVIIFSPR…PGLKGEIQDA (84 aa)) lie on the Cytoplasmic side of the membrane.

The protein belongs to the pannexin family. As to quaternary structure, monomer (isoform Lethal). As to expression, isoform Neural is expressed in synapses of giant fibers (GF), in a large thoracic cell in location of postsynaptic target and optic lobe lamina and medulla. Isoform Lethal is expressed in embryonic mesodermal derivatives. During metamorphosis, both isoforms are dynamically expressed in pupal nervous system.

It localises to the cell membrane. The protein localises to the cell junction. The protein resides in the gap junction. In terms of biological role, structural component of the gap junctions at electrical synapses in distal and mid-depth levels in the lamina. Isoform Lethal forms voltage sensitive intercellular channels through homotypic interactions. In Drosophila melanogaster (Fruit fly), this protein is Innexin shaking-B (shakB).